The sequence spans 156 residues: Small ribosomal subunit protein uS7 (156 aa).

Belongs to the universal ribosomal protein uS7 family. As to quaternary structure, part of the 30S ribosomal subunit. Contacts proteins S9 and S11.

In terms of biological role, one of the primary rRNA binding proteins, it binds directly to 16S rRNA where it nucleates assembly of the head domain of the 30S subunit. Is located at the subunit interface close to the decoding center, probably blocks exit of the E-site tRNA. The chain is Small ribosomal subunit protein uS7 from Pseudomonas syringae pv. syringae (strain B728a).